A 147-amino-acid polypeptide reads, in one-letter code: D-aminoacyl-tRNA deacylase (147 aa).

A Gly-cisPro motif, important for rejection of L-amino acids motif is present at residues 136–137 (GP).

Belongs to the DTD family. Homodimer.

It localises to the cytoplasm. The enzyme catalyses glycyl-tRNA(Ala) + H2O = tRNA(Ala) + glycine + H(+). The catalysed reaction is a D-aminoacyl-tRNA + H2O = a tRNA + a D-alpha-amino acid + H(+). Its function is as follows. An aminoacyl-tRNA editing enzyme that deacylates mischarged D-aminoacyl-tRNAs. Also deacylates mischarged glycyl-tRNA(Ala), protecting cells against glycine mischarging by AlaRS. Acts via tRNA-based rather than protein-based catalysis; rejects L-amino acids rather than detecting D-amino acids in the active site. By recycling D-aminoacyl-tRNA to D-amino acids and free tRNA molecules, this enzyme counteracts the toxicity associated with the formation of D-aminoacyl-tRNA entities in vivo and helps enforce protein L-homochirality. The sequence is that of D-aminoacyl-tRNA deacylase from Streptococcus dysgalactiae subsp. equisimilis (Streptococcus equisimilis).